The sequence spans 807 residues: Glycerol-3-phosphate acyltransferase (807 aa).

Residues 308 to 313 (CHRSHM) carry the HXXXXD motif motif.

Belongs to the GPAT/DAPAT family.

It is found in the cell inner membrane. The enzyme catalyses sn-glycerol 3-phosphate + an acyl-CoA = a 1-acyl-sn-glycero-3-phosphate + CoA. It functions in the pathway phospholipid metabolism; CDP-diacylglycerol biosynthesis; CDP-diacylglycerol from sn-glycerol 3-phosphate: step 1/3. This Shewanella pealeana (strain ATCC 700345 / ANG-SQ1) protein is Glycerol-3-phosphate acyltransferase.